Reading from the N-terminus, the 676-residue chain is Hypermethylated in cancer 1 protein (676 aa).

Residues 1 to 27 (APGARPAASRERGHKSREERCGERGAA) are disordered. Over residues 8-23 (ASRERGHKSREERCGE) the composition is skewed to basic and acidic residues. The region spanning 63-126 (CDVIIVVQNA…IYTGRLGECE (64 aa)) is the BTB domain. The interval 241–245 (GLDLS) is binding to CtBP. 2 disordered regions span residues 264–326 (PAEP…LPRG) and 342–405 (GPYL…DRYC). 2 stretches are compositionally biased toward basic and acidic residues: residues 266 to 278 (EPRE…RHDS) and 351 to 361 (EKELEREEKAE). Low complexity predominate over residues 384 to 398 (STSEETGSSEGPSPG). 5 consecutive C2H2-type zinc fingers follow at residues 420-447 (YVCI…EEEL), 474-501 (YRCS…LTRP), 502-529 (YPCT…GLKP), 530-557 (FACD…GEKP), and 558-585 (YECQ…AGPD).

This sequence belongs to the krueppel C2H2-type zinc-finger protein family. Hic subfamily. As to quaternary structure, interacts with CtBP. In terms of tissue distribution, isoform 1 is highly expressed in kidney and lung. Expression of isoform 2 is higher in the lens, retina and stomach, and extremely low in heart, muscle, kidney and lung. Isoform 3 is weakly expressed in heart, kidney and lens.

It localises to the nucleus. Its function is as follows. Binds specifically to the gamma F-1-binding motif of the gamma F-crystallin promoter. May have a regulatory role in sclerotome specification and/or differentiation. Isoform 2 functions as a transcriptional repressor in lens cells. This chain is Hypermethylated in cancer 1 protein (HIC1), found in Gallus gallus (Chicken).